A 309-amino-acid chain; its full sequence is 4-diphosphocytidyl-2-C-methyl-D-erythritol kinase (309 aa).

Lysine 11 is an active-site residue. 94 to 104 (PVAAGLAGGSA) contacts ATP. The active site involves aspartate 136.

Belongs to the GHMP kinase family. IspE subfamily.

It carries out the reaction 4-CDP-2-C-methyl-D-erythritol + ATP = 4-CDP-2-C-methyl-D-erythritol 2-phosphate + ADP + H(+). It participates in isoprenoid biosynthesis; isopentenyl diphosphate biosynthesis via DXP pathway; isopentenyl diphosphate from 1-deoxy-D-xylulose 5-phosphate: step 3/6. In terms of biological role, catalyzes the phosphorylation of the position 2 hydroxy group of 4-diphosphocytidyl-2C-methyl-D-erythritol. This Synechococcus sp. (strain JA-3-3Ab) (Cyanobacteria bacterium Yellowstone A-Prime) protein is 4-diphosphocytidyl-2-C-methyl-D-erythritol kinase.